The sequence spans 245 residues: MKDVIVIKIGGVAAQKLSDKFIKQMQEWIAAGKKIVVVHGGGLVINQLMKERQLPTRKVKGLRVTAKSDLPIIEQALLGQVGRTLTQELNDSDIESLQLVSHLGKTVLADFIDKDLYGYVGQVTAIQTAYLEQLLDADMVPVLASLGENAAGELLNINADYLAAAVASSLQAEKLILMTDIEGVLEDKKVLPQLLTSQISKKIQTGVIKGGMIPKIESAVQTVLSGVGQVLIGDNLLTGTLIAEG.

Residues 41–42, arginine 63, and asparagine 156 contribute to the substrate site; that span reads GG.

It belongs to the acetylglutamate kinase family. ArgB subfamily.

It is found in the cytoplasm. The enzyme catalyses N-acetyl-L-glutamate + ATP = N-acetyl-L-glutamyl 5-phosphate + ADP. The protein operates within amino-acid biosynthesis; L-arginine biosynthesis; N(2)-acetyl-L-ornithine from L-glutamate: step 2/4. Catalyzes the ATP-dependent phosphorylation of N-acetyl-L-glutamate. In Streptococcus sanguinis (strain SK36), this protein is Acetylglutamate kinase.